A 382-amino-acid chain; its full sequence is ATP phosphoribosyltransferase regulatory subunit (382 aa).

This sequence belongs to the class-II aminoacyl-tRNA synthetase family. HisZ subfamily. Heteromultimer composed of HisG and HisZ subunits.

Its subcellular location is the cytoplasm. It participates in amino-acid biosynthesis; L-histidine biosynthesis; L-histidine from 5-phospho-alpha-D-ribose 1-diphosphate: step 1/9. Its function is as follows. Required for the first step of histidine biosynthesis. May allow the feedback regulation of ATP phosphoribosyltransferase activity by histidine. The polypeptide is ATP phosphoribosyltransferase regulatory subunit (Burkholderia thailandensis (strain ATCC 700388 / DSM 13276 / CCUG 48851 / CIP 106301 / E264)).